Reading from the N-terminus, the 426-residue chain is Probable serine/threonine-protein kinase PBL2 (426 aa).

The interval 1 to 54 is disordered; that stretch reads MGNCLDSSAKVDNSNHSPHANSASSGSKVSSKTSRSTGPSGLSTTSYSTDSSFG. Residue Gly-2 is the site of N-myristoyl glycine attachment. Residue Cys-4 is the site of S-palmitoyl cysteine attachment. Residues 14-38 are compositionally biased toward low complexity; that stretch reads SNHSPHANSASSGSKVSSKTSRSTG. Residues 39 to 52 show a composition bias toward polar residues; sequence PSGLSTTSYSTDSS. Thr-75 is subject to Phosphothreonine. A Protein kinase domain is found at 86–369; it reads FRQDNLLGEG…SEVLVTLEQL (284 aa). Residues 92–100 and Lys-124 contribute to the ATP site; that span reads LGEGGFGCV. Tyr-169 carries the post-translational modification Phosphotyrosine. The Proton acceptor role is filled by Asp-219. At Ser-253 the chain carries O-UMP-serine. Residue Ser-253 is modified to Phosphoserine. 2 positions are modified to phosphothreonine: Thr-254 and Thr-259. An O-UMP-threonine modification is found at Thr-254. The residue at position 267 (Tyr-267) is a Phosphotyrosine. Residues 374 to 426 are disordered; sequence KPGTKHTQMESPRFHHSSVMQKSPVRYSHDRPLLHMTPGASPLPSYTQSPRVR. Over residues 417 to 426 the composition is skewed to polar residues; it reads PSYTQSPRVR.

This sequence belongs to the protein kinase superfamily. Ser/Thr protein kinase family. Interacts with FLS2. Interacts with the Xanthomonas campestris effector XopAC/AvrAC; the recognition of X.campestris effector XopAC/AvrAC requires the presence of RKS1 and RPP13L4/ZAR1. Component of a stable high-order oligomeric complex made of RKS1 and RPP13L4/ZAR1 which recruits X.campestris effector XopAC/AvrAC-mediated uridylylated PBL2 in the presence of ATP to form a wheel-like pentameric resistosome; this complex triggers immunity toward X.campestris in vascular tissues. Binds to RKS1 when uridylylated. Uridylylated at Ser-253 and Thr-254 by Xanthomonas campestris effector AvrAC/XopAC; this uridylylation is necessary for specific recruitment to RKS1 and to trigger immunity. Strongly expressed in leaves, moderately in roots, and barely in flowers, mostly in pedicels.

The protein resides in the cell membrane. The protein localises to the nucleus. The enzyme catalyses L-seryl-[protein] + ATP = O-phospho-L-seryl-[protein] + ADP + H(+). It catalyses the reaction L-threonyl-[protein] + ATP = O-phospho-L-threonyl-[protein] + ADP + H(+). In terms of biological role, involved in disease resistance signaling. Contributes to pathogen-associated molecular pattern (PAMP)-triggered immunity (PTI) signaling and defense responses downstream of FLS2. Acts as a BIK1 decoy and enables Xanthomonas campestris AvrAC/XopAC detection; X.campestris effector AvrAC/XopAC-mediated uridylylation promotes the formation of a complex with RKS1 and RPP13L4/ZAR1 which, in turn, activates effector-triggered immunity (ETI) against X.campestris. Promotes, when uridylylated by AvrAC/XopAC, the release of ADP from the inactive RKS1-ZAR1 complex, thus activating the resistosome. The polypeptide is Probable serine/threonine-protein kinase PBL2 (Arabidopsis thaliana (Mouse-ear cress)).